The chain runs to 109 residues: UPF0449 protein C19orf25 homolog (109 aa).

The residue at position 63 (Y63) is a Phosphotyrosine.

This sequence belongs to the UPF0449 family.

This is UPF0449 protein C19orf25 homolog from Rattus norvegicus (Rat).